Reading from the N-terminus, the 175-residue chain is Regenerating islet-derived protein 3-beta (175 aa).

The N-terminal stretch at 1–26 (MLPPTACSVMSWMLLSCLMLLSQVQG) is a signal peptide. Residues 27–37 (EDSLKNIPSAR) constitute a propeptide that is removed on maturation. Disulfide bonds link cysteine 40-cysteine 51, cysteine 68-cysteine 171, and cysteine 146-cysteine 163. A C-type lectin domain is found at 47–172 (YGSYCYALFQ…CEVKLPYVCK (126 aa)). Histidine 107 lines the Zn(2+) pocket. The short motif at 114-116 (EPN) is the EPN element. Residue glutamate 121 coordinates Zn(2+).

Forms a hexameric membrane-permeabilizing oligomeric pore on membrane phospholipids. The hexamer is formed by three dimers related by helical symmetry. Forms filaments, filamentation traps pore complexes and limits damage to host cells. Interacts with EXTL3. Proteolytic processing by trypsin removes an inhibitory N-terminal propeptide and is essential for peptidoglycan binding and antibacterial activity. Constitutively expressed in the small intestine, moderately in colon and at an extremely low level in healthy pancreas.

The protein localises to the secreted. Lipopolysaccharide inhibits pore-forming activity, explaining why is bactericidal for Gram-positive but not Gram-negative bacteria. In terms of biological role, bactericidal C-type lectin which acts against several intestinal Gram-positive and Gram-negative bacteria. Lacks antibacterial activity against S.typhimurium. May play a role in protection against infection with S.enteritidis by inhibiting its translocation from the gut lumen into intestinal tissues and further extraintestinal tissues. Its function is as follows. Acts as a hormone in response to different stimuli. Secreted by different cell types to activate its receptor EXTL3 and induce cell specific signaling pathways. In pancreas, is able stimulate cell proliferation. In Mus musculus (Mouse), this protein is Regenerating islet-derived protein 3-beta.